The primary structure comprises 227 residues: Protein LppM (227 aa).

The N-terminal stretch at 1 to 24 is a signal peptide; that stretch reads MARTRRRGMLAIAMLLMLVPLATG. Cys-25 carries N-palmitoyl cysteine lipidation. Cys-25 carries S-diacylglycerol cysteine lipidation. The important for bacterial uptake by host macrophages stretch occupies residues 26–185; sequence LRVRASITIS…ARYTDPNTRS (160 aa). A helical membrane pass occupies residues 190–210; that stretch reads GIWLGIAAFAAAGVVAVLAWI.

A shorter form (about 20 kDa) is secreted; upon overexpression of the whole protein in M.smegmatis the C-terminus of the short form is about residue 187, suggesting it is generated by cleavage of the protein before its C-terminal transmembrane domain.

The protein resides in the membrane. Its subcellular location is the secreted. It localises to the cell wall. A putative lipoprotein that seems to be specialized for the initial steps of macrophage infection. A non-acylated fragment (residues 26-185) binds phosphatidyl-myo-inositol mannosides (PIMs). Limits, in a TLR2-dependent fashion, bacterial uptake by host (mouse); this effect may be mediated by nonacylated fragment 26-185. Plays a TLR2-dependent role in host phagosome maturation arrest. Plays a TLR2-independent role in chemokine production during the first 24 hours of mouse infection. This chain is Protein LppM (lppM), found in Mycobacterium tuberculosis (strain ATCC 25618 / H37Rv).